The following is a 254-amino-acid chain: MCSCLVVKNTVIGSGRTKIAVPLVARDAAVLSAVLDQIKNLPFDIVEFRADFLECAGSIGEVLRHTQTVRDALPDKPLLFTFRRHGEGGSFPCSDDYYFELLDALIESRLPDIIDIELFSGETAVRCAVANAQKNGIAALLCNHEFHRTPPQEEIVCRLKQMEDCGADICKIAVMPQSAEDVLTLLSATLKAKELAAKPIVTMSMGQTGAVSRLAGQVFGSSITFGSGTQNSAPGQIGVSALRATLDCLENGAD.

Residues 47–49 and R83 contribute to the 3-dehydroquinate site; that span reads EFR. H144 functions as the Proton donor/acceptor in the catalytic mechanism. The active-site Schiff-base intermediate with substrate is K171. Residues R213, S232, and Q236 each coordinate 3-dehydroquinate.

The protein belongs to the type-I 3-dehydroquinase family. Homodimer.

It catalyses the reaction 3-dehydroquinate = 3-dehydroshikimate + H2O. It participates in metabolic intermediate biosynthesis; chorismate biosynthesis; chorismate from D-erythrose 4-phosphate and phosphoenolpyruvate: step 3/7. In terms of biological role, involved in the third step of the chorismate pathway, which leads to the biosynthesis of aromatic amino acids. Catalyzes the cis-dehydration of 3-dehydroquinate (DHQ) and introduces the first double bond of the aromatic ring to yield 3-dehydroshikimate. The sequence is that of 3-dehydroquinate dehydratase from Neisseria meningitidis serogroup A / serotype 4A (strain DSM 15465 / Z2491).